The following is a 50-amino-acid chain: Large ribosomal subunit protein eL39 (50 aa).

Belongs to the eukaryotic ribosomal protein eL39 family.

The protein is Large ribosomal subunit protein eL39 of Methanosphaerula palustris (strain ATCC BAA-1556 / DSM 19958 / E1-9c).